Here is a 1792-residue protein sequence, read N- to C-terminus: uncharacterized protein (1792 aa).

Residues 1 to 28 show a composition bias toward low complexity; it reads MNNNNNNNNNSNNNNNSNNNNNGNSNNN. Disordered stretches follow at residues 1-34, 162-187, 440-461, 544-568, 736-777, 837-979, 1044-1071, 1084-1106, 1160-1215, 1257-1290, 1651-1686, 1704-1731, and 1742-1761; these read MNNN…SGKG, TNIS…SHHH, KKRK…NKSS, VIDD…SIIN, NKNK…INSN, TKGK…NDLK, VSKS…KEQS, NMNN…NDNK, TSSG…VLER, NITA…NNNG, LRSK…GRKK, PRKK…NSEK, and IENK…NLNN. Residues 169–182 show a composition bias toward polar residues; the sequence is KQPISSNQHPYQQK. The span at 550-559 shows a compositional bias: basic residues; that stretch reads KRNKKEKKKT. Low complexity predominate over residues 741–776; sequence PNNINSNDNNNKNDDNNNNNNKNVDGNNNNNNNINS. Basic residues predominate over residues 838-847; it reads KGKKKGRKKK. A compositionally biased stretch (basic and acidic residues) spans 856–873; sequence NIKEDIKSSKKDKKKDNI. Over residues 874–924 the composition is skewed to low complexity; the sequence is NDNNNDNNNDNNNDNNNDNNNDNNNDNNNDNNNNNNNNNNNNNNNNNNNHN. A compositionally biased stretch (basic residues) spans 943–954; the sequence is KKKTRQYRKKSK. Residues 955 to 966 are compositionally biased toward basic and acidic residues; that stretch reads ITNDDNNEKIKQ. Residues 1045-1057 are compositionally biased toward low complexity; it reads SKSNIPSSFSSPP. Basic and acidic residues-rich tracts occupy residues 1060–1071, 1088–1106, and 1166–1192; these read TNNKNDIDKEQS, EKSK…NDNK, and NKEE…KNVD. The segment covering 1205–1215 has biased composition (basic residues); sequence RKKRKKDVLER. Over residues 1261–1289 the composition is skewed to low complexity; sequence NNNNDNNKNNDNDNNNNNNDNIINNNNNN. Basic residues-rich tracts occupy residues 1660-1686 and 1704-1717; these read KEHK…GRKK and PRKK…RKSK.

This is an uncharacterized protein from Plasmodium falciparum (isolate 3D7).